The primary structure comprises 192 residues: T-cell surface glycoprotein CD3 epsilon chain (192 aa).

Positions 1–21 (MQSGNLWRALGLCLLLVGAWA) are cleaved as a signal peptide. Residues 23–114 (DADEQKPYEV…QNCMEVNLME (92 aa)) lie on the Extracellular side of the membrane. An Ig-like domain is found at 26-97 (EQKPYEVSIS…EGNKEAAHTL (72 aa)). Cys43 and Cys84 are joined by a disulfide. An N-linked (GlcNAc...) asparagine glycan is attached at Asn72. Residues 115–135 (VATIIVVDICVTLGLLLLVYY) traverse the membrane as a helical segment. Over 136–192 (WSKSRKAKASPMTRGAGAGGRPRGQNKGRPPPVPNPDYEPIRKGQRDLYAGLNQRGV) the chain is Cytoplasmic. The segment at 145-180 (SPMTRGAGAGGRPRGQNKGRPPPVPNPDYEPIRKGQ) is disordered. The segment at 160–177 (QNKGRPPPVPNPDYEPIR) is NUMB-binding region. An ITAM domain is found at 163–190 (GRPPPVPNPDYEPIRKGQRDLYAGLNQR). Residues 164–171 (RPPPVPNP) are proline-rich sequence. Phosphotyrosine is present on residues Tyr173 and Tyr184.

As to quaternary structure, the TCR-CD3 complex is composed of a CD3D/CD3E and a CD3G/CD3E heterodimers that preferentially associate with TCRalpha and TCRbeta, respectively, to form TCRalpha/CD3E/CD3G and TCRbeta/CD3G/CD3E trimers. In turn, the hexamer interacts with CD3Z homodimer to form the TCR-CD3 complex. Alternatively, TCRalpha and TCRbeta can be replaced by TCRgamma and TCRdelta. Interacts with CD6. Interacts (via Proline-rich sequence) with NCK1; the interaction is ligand dependent but independent of tyrosine kinase activation. In terms of processing, phosphorylated on Tyr residues after T-cell receptor triggering by LCK in association with CD4/CD8.

Its subcellular location is the cell membrane. Functionally, part of the TCR-CD3 complex present on T-lymphocyte cell surface that plays an essential role in adaptive immune response. When antigen presenting cells (APCs) activate T-cell receptor (TCR), TCR-mediated signals are transmitted across the cell membrane by the CD3 chains CD3D, CD3E, CD3G and CD3Z. All CD3 chains contain immunoreceptor tyrosine-based activation motifs (ITAMs) in their cytoplasmic domain. Upon TCR engagement, these motifs become phosphorylated by Src family protein tyrosine kinases LCK and FYN, resulting in the activation of downstream signaling pathways. In addition of this role of signal transduction in T-cell activation, CD3E plays an essential role in correct T-cell development. Also participates in internalization and cell surface down-regulation of TCR-CD3 complexes via endocytosis sequences present in CD3E cytosolic region. In addition to its role as a TCR coreceptor, it serves as a receptor for ITPRIPL1. Ligand recognition inhibits T-cell activation by promoting interaction with NCK1, which prevents CD3E-ZAP70 interaction and blocks the ERK-NFkB signaling cascade and calcium influx. The polypeptide is T-cell surface glycoprotein CD3 epsilon chain (CD3E) (Bos taurus (Bovine)).